The chain runs to 436 residues: Antilisterial bacteriocin subtilosin biosynthesis protein AlbD (436 aa).

10 helical membrane passes run 27 to 47, 55 to 75, 113 to 133, 134 to 154, 164 to 184, 187 to 207, 240 to 260, 270 to 290, 315 to 335, and 395 to 415; these read IAAG…QAGI, TYII…SVTS, LFFF…GAQT, LFWL…GVVL, LMFL…ALMP, TIPL…PVFL, AMLL…FQMM, IYIV…LYSI, FYSG…GFIS, and AILA…LVIV.

It localises to the cell membrane. Its function is as follows. Involved in the production of the bacteriocin subtilosin. Required for immunity to subtilosin. This is Antilisterial bacteriocin subtilosin biosynthesis protein AlbD (albD) from Bacillus subtilis (strain 168).